The primary structure comprises 395 residues: L-methionine gamma-lyase (395 aa).

Pyridoxal 5'-phosphate-binding positions include 56–58 and 86–87; these read YTR and GM. Tyr111 is a binding site for substrate. 206-208 serves as a coordination point for pyridoxal 5'-phosphate; the sequence is SVT. At Lys209 the chain carries N6-(pyridoxal phosphate)lysine. Substrate is bound at residue Arg373.

It belongs to the trans-sulfuration enzymes family. L-methionine gamma-lyase subfamily. As to quaternary structure, homotetramer. Pyridoxal 5'-phosphate is required as a cofactor.

The enzyme catalyses L-methionine + H2O = methanethiol + 2-oxobutanoate + NH4(+). It catalyses the reaction L-homocysteine + H2O = 2-oxobutanoate + hydrogen sulfide + NH4(+) + H(+). Functionally, catalyzes the alpha,gamma-elimination of L-methionine to produce methanethiol, 2-oxobutanoate and ammonia; methanethiol (methyl mercaptan) is considered to be one of the main causes of the oral malodor associated with periodontitis. Also displays homocysteine desulfhydrase activity, degrading homocysteine to produce hydrogen sulfide, 2-oxobutanoate and ammonia. L-cysteine and S-methyl-L-cysteine are poor substrates for the enzyme. Plays an important role in the resistance of F.nucleatum to the antibacterial agent 3-chloro-DL-alanine (3CA), thanks to its 3CA chloride-lyase (deaminating) activity. The chain is L-methionine gamma-lyase from Fusobacterium nucleatum subsp. polymorphum (Fusobacterium polymorphum).